The primary structure comprises 379 residues: Glutamate 5-kinase (379 aa).

ATP is bound at residue Lys-15. Substrate-binding residues include Ser-59, Asp-146, and Asn-158. 178-179 (TD) provides a ligand contact to ATP. The region spanning 285 to 363 (RGAVTVDVGA…SEFERLLGYS (79 aa)) is the PUA domain.

Belongs to the glutamate 5-kinase family.

The protein localises to the cytoplasm. The catalysed reaction is L-glutamate + ATP = L-glutamyl 5-phosphate + ADP. It functions in the pathway amino-acid biosynthesis; L-proline biosynthesis; L-glutamate 5-semialdehyde from L-glutamate: step 1/2. Catalyzes the transfer of a phosphate group to glutamate to form L-glutamate 5-phosphate. This Paracidovorax citrulli (strain AAC00-1) (Acidovorax citrulli) protein is Glutamate 5-kinase.